The chain runs to 644 residues: Heat shock protein SSC3, mitochondrial (644 aa).

Belongs to the heat shock protein 70 family.

The protein resides in the mitochondrion matrix. The protein localises to the mitochondrion nucleoid. In terms of biological role, plays a role in facilitating the assembly of some protein complexes inside the mitochondria. It may initiate the events that lead to refolding of imported precursors in the matrix space. This chain is Heat shock protein SSC3, mitochondrial (ECM10), found in Saccharomyces cerevisiae (strain ATCC 204508 / S288c) (Baker's yeast).